The sequence spans 213 residues: 3-isopropylmalate dehydratase small subunit (213 aa).

The protein belongs to the LeuD family. LeuD type 1 subfamily. Heterodimer of LeuC and LeuD.

The catalysed reaction is (2R,3S)-3-isopropylmalate = (2S)-2-isopropylmalate. It functions in the pathway amino-acid biosynthesis; L-leucine biosynthesis; L-leucine from 3-methyl-2-oxobutanoate: step 2/4. Catalyzes the isomerization between 2-isopropylmalate and 3-isopropylmalate, via the formation of 2-isopropylmaleate. This Magnetococcus marinus (strain ATCC BAA-1437 / JCM 17883 / MC-1) protein is 3-isopropylmalate dehydratase small subunit.